The following is a 56-amino-acid chain: Large ribosomal subunit protein bL32 (56 aa).

The segment at 1–27 is disordered; sequence MAVQQNKKSRSRRDMRRSHDALTTAAV. The span at 7-16 shows a compositional bias: basic residues; the sequence is KKSRSRRDMR.

The protein belongs to the bacterial ribosomal protein bL32 family.

In Actinobacillus pleuropneumoniae serotype 7 (strain AP76), this protein is Large ribosomal subunit protein bL32.